We begin with the raw amino-acid sequence, 88 residues long: Putative membrane protein insertion efficiency factor (88 aa).

Residues 68–88 (VPPPNSDTRARGEADARSHRL) are disordered. Positions 75–88 (TRARGEADARSHRL) are enriched in basic and acidic residues.

This sequence belongs to the UPF0161 family.

The protein localises to the cell inner membrane. Functionally, could be involved in insertion of integral membrane proteins into the membrane. The polypeptide is Putative membrane protein insertion efficiency factor (Burkholderia orbicola (strain MC0-3)).